We begin with the raw amino-acid sequence, 453 residues long: Exopolyphosphatase PRUNE1 (453 aa).

An N-acetylmethionine modification is found at Met-1. Mn(2+) contacts are provided by Asp-28, Asp-30, Asp-106, and Asp-179. Positions 106-108 (DHH) match the DHH motif motif. Residues 393-420 (SLISGLSQDEEDPPLPPTPMNSLVDECP) form an essential for homodimerization region. Residues 395 to 421 (ISGLSQDEEDPPLPPTPMNSLVDECPL) are disordered. At Ser-399 the chain carries Phosphoserine. A Phosphothreonine modification is found at Thr-410. Position 414 is a phosphoserine (Ser-414).

It belongs to the PPase class C family. Prune subfamily. In terms of assembly, homooligomer. Able to homodimerize via its C-terminal domain. Interacts with NME1. Interacts with GSK3; at focal adhesion complexes where paxillin and vinculin are colocalized. Interacts with alpha and beta tubulin. The cofactor is Mn(2+). As to expression, ubiquitously expressed. Seems to be overexpressed in aggressive sarcoma subtypes, such as leiomyosarcomas and malignant fibrous histiocytomas (MFH) as well as in the less malignant liposarcomas.

It is found in the cytoplasm. The protein resides in the nucleus. It localises to the cell junction. Its subcellular location is the focal adhesion. The enzyme catalyses diphosphate + H2O = 2 phosphate + H(+). With respect to regulation, activated by magnesium ions and inhibited by manganese ions. Inhibited by dipyridamole, moderately sensitive to IBMX and inhibited by vinpocetine. In terms of biological role, phosphodiesterase (PDE) that has higher activity toward cAMP than cGMP, as substrate. Plays a role in cell proliferation, migration and differentiation, and acts as a negative regulator of NME1. Plays a role in the regulation of neurogenesis. Involved in the regulation of microtubule polymerization. This is Exopolyphosphatase PRUNE1 from Homo sapiens (Human).